We begin with the raw amino-acid sequence, 226 residues long: Cytidylate kinase (226 aa).

Position 12–20 (12–20) interacts with ATP; the sequence is GPSGAGKGT.

The protein belongs to the cytidylate kinase family. Type 1 subfamily.

It is found in the cytoplasm. It catalyses the reaction CMP + ATP = CDP + ADP. The enzyme catalyses dCMP + ATP = dCDP + ADP. The chain is Cytidylate kinase from Xanthomonas campestris pv. campestris (strain B100).